The following is a 38-amino-acid chain: Large ribosomal subunit protein bL36 (38 aa).

This sequence belongs to the bacterial ribosomal protein bL36 family.

The protein is Large ribosomal subunit protein bL36 of Buchnera aphidicola subsp. Schizaphis graminum (strain Sg).